We begin with the raw amino-acid sequence, 294 residues long: ATP synthase gamma chain (294 aa).

It belongs to the ATPase gamma chain family. In terms of assembly, F-type ATPases have 2 components, CF(1) - the catalytic core - and CF(0) - the membrane proton channel. CF(1) has five subunits: alpha(3), beta(3), gamma(1), delta(1), epsilon(1). CF(0) has three main subunits: a, b and c.

Its subcellular location is the cell inner membrane. Its function is as follows. Produces ATP from ADP in the presence of a proton gradient across the membrane. The gamma chain is believed to be important in regulating ATPase activity and the flow of protons through the CF(0) complex. The sequence is that of ATP synthase gamma chain from Campylobacter jejuni (strain RM1221).